The sequence spans 555 residues: Glucose-6-phosphate isomerase (555 aa).

Residue E365 is the Proton donor of the active site. Catalysis depends on residues H396 and K522.

This sequence belongs to the GPI family.

Its subcellular location is the cytoplasm. It catalyses the reaction alpha-D-glucose 6-phosphate = beta-D-fructose 6-phosphate. It functions in the pathway carbohydrate biosynthesis; gluconeogenesis. It participates in carbohydrate degradation; glycolysis; D-glyceraldehyde 3-phosphate and glycerone phosphate from D-glucose: step 2/4. In terms of biological role, catalyzes the reversible isomerization of glucose-6-phosphate to fructose-6-phosphate. This is Glucose-6-phosphate isomerase from Psychrobacter arcticus (strain DSM 17307 / VKM B-2377 / 273-4).